A 399-amino-acid chain; its full sequence is Acetate kinase (399 aa).

Asn7 is a Mg(2+) binding site. Lys14 serves as a coordination point for ATP. Arg89 is a binding site for substrate. Asp146 functions as the Proton donor/acceptor in the catalytic mechanism. ATP-binding positions include 206–210, 280–282, and 328–332; these read HLGNG, DMR, and GIGEN. Glu382 lines the Mg(2+) pocket.

This sequence belongs to the acetokinase family. Homodimer. Requires Mg(2+) as cofactor. It depends on Mn(2+) as a cofactor.

Its subcellular location is the cytoplasm. It catalyses the reaction acetate + ATP = acetyl phosphate + ADP. The protein operates within metabolic intermediate biosynthesis; acetyl-CoA biosynthesis; acetyl-CoA from acetate: step 1/2. Functionally, catalyzes the formation of acetyl phosphate from acetate and ATP. Can also catalyze the reverse reaction. The chain is Acetate kinase from Campylobacter fetus subsp. fetus (strain 82-40).